We begin with the raw amino-acid sequence, 287 residues long: Beta-lactamase GES-5 (287 aa).

The first 18 residues, 1-18 (MRFIHALLLAGIAHSAYA), serve as a signal peptide directing secretion. Cys63 and Cys233 are disulfide-bonded. The active-site Nucleophile; acyl-ester intermediate is Ser64. Residues Ser64, Ser125, Asn127, Thr230, Thr232, and Arg238 each contribute to the imipenem site.

The protein belongs to the class-A beta-lactamase family.

It localises to the secreted. The enzyme catalyses a beta-lactam + H2O = a substituted beta-amino acid. Inhibited by the beta-lactamase-blocking agents clavulanic acid, sulbactam and tazobactam, via a covalent binding to Ser-64. In terms of biological role, confers resistance to penicillins, cephalosporins and carbapenems. Has carbapenem-hydrolyzing activity. The polypeptide is Beta-lactamase GES-5 (Klebsiella pneumoniae).